A 1436-amino-acid polypeptide reads, in one-letter code: DNA-directed RNA polymerase subunit beta' (1436 aa).

The Zn(2+) site is built by C70, C72, C85, and C88. The Mg(2+) site is built by D481, D483, and D485. C829, C903, C910, and C913 together coordinate Zn(2+).

The protein belongs to the RNA polymerase beta' chain family. In terms of assembly, the RNAP catalytic core consists of 2 alpha, 1 beta, 1 beta' and 1 omega subunit. When a sigma factor is associated with the core the holoenzyme is formed, which can initiate transcription. It depends on Mg(2+) as a cofactor. Requires Zn(2+) as cofactor.

It carries out the reaction RNA(n) + a ribonucleoside 5'-triphosphate = RNA(n+1) + diphosphate. In terms of biological role, DNA-dependent RNA polymerase catalyzes the transcription of DNA into RNA using the four ribonucleoside triphosphates as substrates. This Flavobacterium johnsoniae (strain ATCC 17061 / DSM 2064 / JCM 8514 / BCRC 14874 / CCUG 350202 / NBRC 14942 / NCIMB 11054 / UW101) (Cytophaga johnsonae) protein is DNA-directed RNA polymerase subunit beta'.